The sequence spans 288 residues: HTH-type transcriptional repressor CarA (288 aa).

In terms of domain architecture, HTH merR-type spans 2–73 (TLRIRTIARM…VSEAIAQVKT (72 aa)). Residues 5–24 (IRTIARMTGIREATLRAWER) constitute a DNA-binding region (H-T-H motif). Positions 162–288 (GPRALLACPS…NQVRNAQNRP (127 aa)) constitute a B12-binding domain.

This sequence belongs to the CarA/CarH B12-binding photoregulator family. Forms homodimers or oligomers. Interacts with CarS.

With respect to regulation, binds cobalamin (vitamin B12), but cobalamin is not required for CarA activity. Interaction with CarS prevents binding to DNA. Negative regulator of the carB operon in the dark. Binds specifically to the CarA operator, in the region around the carB promoter, which blocks access to the RNA polymerase. The protein is HTH-type transcriptional repressor CarA (carA) of Myxococcus xanthus.